Reading from the N-terminus, the 224-residue chain is tRNA (guanine-N(7)-)-methyltransferase (224 aa).

Residues glutamate 54, glutamate 79, glutamate 106, and aspartate 129 each coordinate S-adenosyl-L-methionine. Aspartate 129 is a catalytic residue. Positions 133 and 165 each coordinate substrate.

It belongs to the class I-like SAM-binding methyltransferase superfamily. TrmB family.

It carries out the reaction guanosine(46) in tRNA + S-adenosyl-L-methionine = N(7)-methylguanosine(46) in tRNA + S-adenosyl-L-homocysteine. Its pathway is tRNA modification; N(7)-methylguanine-tRNA biosynthesis. Catalyzes the formation of N(7)-methylguanine at position 46 (m7G46) in tRNA. The chain is tRNA (guanine-N(7)-)-methyltransferase from Chlamydia abortus (strain DSM 27085 / S26/3) (Chlamydophila abortus).